Here is a 488-residue protein sequence, read N- to C-terminus: 26S proteasome non-ATPase regulatory subunit 3 homolog A (488 aa).

A PCI domain is found at 240 to 421 (CRYLFYLGKI…GCMVSKETGD (182 aa)). The tract at residues 451 to 488 (RFPPNTHKEKESDEKRRERKQQEEELAKHMAEEDDDDF) is disordered. Residues 456–481 (THKEKESDEKRRERKQQEEELAKHMA) show a composition bias toward basic and acidic residues.

Belongs to the proteasome subunit S3 family. As to quaternary structure, component of the 19S regulatory particle (RP/PA700) lid subcomplex of the 26S proteasome. The 26S proteasome is composed of a core protease (CP), known as the 20S proteasome, capped at one or both ends by the 19S regulatory particle (RP/PA700). The RP/PA700 complex is composed of at least 17 different subunits in two subcomplexes, the base and the lid, which form the portions proximal and distal to the 20S proteolytic core, respectively. Interacts with UCH1 and UCH2. Ubiquitous with highest expression in flowers.

Acts as a regulatory subunit of the 26 proteasome which is involved in the ATP-dependent degradation of ubiquitinated proteins. The chain is 26S proteasome non-ATPase regulatory subunit 3 homolog A from Arabidopsis thaliana (Mouse-ear cress).